A 149-amino-acid chain; its full sequence is Transcriptional repressor NrdR (149 aa).

A zinc finger lies at 3–34; the sequence is CPFCGNRDTNVRDSRSVNEGTFIKRRRFCGEC. Residues 49 to 139 form the ATP-cone domain; sequence IKVIKKNGSC…VYMNFENEKD (91 aa).

It belongs to the NrdR family. Zn(2+) serves as cofactor.

Its function is as follows. Negatively regulates transcription of bacterial ribonucleotide reductase nrd genes and operons by binding to NrdR-boxes. This Neorickettsia sennetsu (strain ATCC VR-367 / Miyayama) (Ehrlichia sennetsu) protein is Transcriptional repressor NrdR.